The following is a 486-amino-acid chain: CUGBP Elav-like family member 4 (486 aa).

A sufficient for RNA-binding and MSE-dependent splicing activity region spans residues 1–298 (MYIKMATLAN…AAFAAAQMQQ (298 aa)). Residues 18–28 (LSTNGLGSSPG) are compositionally biased toward polar residues. 2 disordered regions span residues 18-39 (LSTNGLGSSPGSAGHMNGLSHS) and 121-149 (LPGMNRPIQVKPADSESRGGSSCLRQPPS). The 82-residue stretch at 54–135 (IKLFIGQIPR…RPIQVKPADS (82 aa)) folds into the RRM 1 domain. The segment covering 138 to 149 (RGGSSCLRQPPS) has biased composition (polar residues). The region spanning 152–232 (RKLFVGMLNK…SSLVVKFADT (81 aa)) is the RRM 2 domain. The tract at residues 239–258 (RRMQQMAGQMGMFNPMAIPF) is necessary for TNNT2 exon 5 inclusion. Positions 404-479 (PQPPPMIPQQ…KRLKVQLKRP (76 aa)) constitute an RRM 3 domain.

It belongs to the CELF/BRUNOL family. As to expression, ubiquitous. Strongly expressed in the cerebellum, hippocampus, amygdala, temporal and frontal cortex and frontal lobes.

It localises to the nucleus. Its subcellular location is the cytoplasm. Its function is as follows. RNA-binding protein implicated in the regulation of pre-mRNA alternative splicing. Mediates exon inclusion and/or exclusion in pre-mRNA that are subject to tissue-specific and developmentally regulated alternative splicing. Specifically activates exon 5 inclusion of cardiac isoforms of TNNT2 during heart remodeling at the juvenile to adult transition. Promotes exclusion of both the smooth muscle (SM) and non-muscle (NM) exons in actinin pre-mRNAs. Activates the splicing of MAPT/Tau exon 10. Binds to muscle-specific splicing enhancer (MSE) intronic sites flanking the alternative exon 5 of TNNT2 pre-mRNA. The chain is CUGBP Elav-like family member 4 (CELF4) from Homo sapiens (Human).